A 119-amino-acid chain; its full sequence is Chymotrypsin inhibitor WCI (119 aa).

5 disulfides stabilise this stretch: Cys-6–Cys-55, Cys-20–Cys-44, Cys-29–Cys-87, Cys-45–Cys-105, and Cys-57–Cys-116.

The protein localises to the secreted. Its function is as follows. Inhibits bovine, insect and wheat chymotrypsins. Inhibits bovine chymotrypsin with Ki of 0.6 nM. Does not inhibit human or wheat alpha-amylases, bovine pancreatic trypsin, or trypsin-like activity isolated from wheat. The protein is Chymotrypsin inhibitor WCI of Triticum aestivum (Wheat).